Reading from the N-terminus, the 167-residue chain is Fluoride-specific ion channel FluC (167 aa).

4 helical membrane passes run 32–52, 69–89, 102–122, and 137–157; these read HVTPIYTIAAISLGASLGALA, IGTLAANLIAAYVVGVTIAYV, FMITGLAGGLSTFSTFTAELF, and LGLHVGGSLALLMLGMLTIGL. Residues Gly109 and Ser112 each contribute to the Na(+) site.

Belongs to the fluoride channel Fluc/FEX (TC 1.A.43) family.

It is found in the cell inner membrane. The catalysed reaction is fluoride(in) = fluoride(out). Its activity is regulated as follows. Na(+) is not transported, but it plays an essential structural role and its presence is essential for fluoride channel function. Its function is as follows. Fluoride-specific ion channel. Important for reducing fluoride concentration in the cell, thus reducing its toxicity. This is Fluoride-specific ion channel FluC from Xanthomonas oryzae pv. oryzae (strain KACC10331 / KXO85).